The chain runs to 316 residues: Cytochrome c biogenesis protein CcsA (316 aa).

A run of 7 helical transmembrane segments spans residues 15–35 (FSIC…TTIL), 44–64 (GIIT…IYSG), 71–91 (LYES…VAYL), 142–162 (MILS…LLVI), 220–240 (VISL…VWAN), 247–267 (WSWD…AIYL), and 281–301 (AIVA…VNLL).

This sequence belongs to the CcmF/CycK/Ccl1/NrfE/CcsA family. May interact with Ccs1.

The protein localises to the plastid. Its subcellular location is the chloroplast thylakoid membrane. In terms of biological role, required during biogenesis of c-type cytochromes (cytochrome c6 and cytochrome f) at the step of heme attachment. The protein is Cytochrome c biogenesis protein CcsA of Trachelium caeruleum (Blue throatwort).